The chain runs to 46 residues: Photosystem II reaction center protein K (46 aa).

Residues 1–9 constitute a propeptide that is removed on maturation; the sequence is MTTLALVLA. A helical transmembrane segment spans residues 18–38; sequence FAPIVDVLPVIPVFFILLAFV.

It belongs to the PsbK family. In terms of assembly, PSII is composed of 1 copy each of membrane proteins PsbA, PsbB, PsbC, PsbD, PsbE, PsbF, PsbH, PsbI, PsbJ, PsbK, PsbL, PsbM, PsbT, PsbX, PsbY, PsbZ, Psb30/Ycf12, at least 3 peripheral proteins of the oxygen-evolving complex and a large number of cofactors. It forms dimeric complexes. This protein is tightly associated with CP43 (psbC), one of the core proteins.

The protein resides in the plastid. It is found in the chloroplast thylakoid membrane. In terms of biological role, one of the components of the core complex of photosystem II (PSII). PSII is a light-driven water:plastoquinone oxidoreductase that uses light energy to abstract electrons from H(2)O, generating O(2) and a proton gradient subsequently used for ATP formation. It consists of a core antenna complex that captures photons, and an electron transfer chain that converts photonic excitation into a charge separation. Required for assembly and/or stability of PSII. The chain is Photosystem II reaction center protein K from Chlamydomonas reinhardtii (Chlamydomonas smithii).